Here is a 648-residue protein sequence, read N- to C-terminus: Biosynthetic arginine decarboxylase (648 aa).

Lys109 carries the N6-(pyridoxal phosphate)lysine modification. 291 to 301 (LDVGGGLGVDY) lines the substrate pocket.

Belongs to the Orn/Lys/Arg decarboxylase class-II family. SpeA subfamily. Mg(2+) is required as a cofactor. The cofactor is pyridoxal 5'-phosphate.

The catalysed reaction is L-arginine + H(+) = agmatine + CO2. Catalyzes the biosynthesis of agmatine from arginine. The chain is Biosynthetic arginine decarboxylase from Prochlorococcus marinus (strain MIT 9313).